A 451-amino-acid polypeptide reads, in one-letter code: Probable D-serine dehydratase (451 aa).

Lys119 carries the N6-(pyridoxal phosphate)lysine modification.

The protein belongs to the serine/threonine dehydratase family. DsdA subfamily. Requires pyridoxal 5'-phosphate as cofactor.

It catalyses the reaction D-serine = pyruvate + NH4(+). This Acidovorax ebreus (strain TPSY) (Diaphorobacter sp. (strain TPSY)) protein is Probable D-serine dehydratase.